The sequence spans 334 residues: CRISPR-associated endonuclease Cas1 (334 aa).

The Mn(2+) site is built by Glu-161, His-226, and Glu-241.

This sequence belongs to the CRISPR-associated endonuclease Cas1 family. Homodimer, forms a heterotetramer with a Cas2 homodimer. It depends on Mg(2+) as a cofactor. The cofactor is Mn(2+).

In terms of biological role, CRISPR (clustered regularly interspaced short palindromic repeat), is an adaptive immune system that provides protection against mobile genetic elements (viruses, transposable elements and conjugative plasmids). CRISPR clusters contain spacers, sequences complementary to antecedent mobile elements, and target invading nucleic acids. CRISPR clusters are transcribed and processed into CRISPR RNA (crRNA). Acts as a dsDNA endonuclease. Involved in the integration of spacer DNA into the CRISPR cassette. This is CRISPR-associated endonuclease Cas1 from Methanothermobacter thermautotrophicus (strain ATCC 29096 / DSM 1053 / JCM 10044 / NBRC 100330 / Delta H) (Methanobacterium thermoautotrophicum).